Reading from the N-terminus, the 328-residue chain is C-type lectin domain family 11 member A (328 aa).

Positions 1–21 are cleaved as a signal peptide; sequence MQAAWLLGALLVPHLLSFGHG. Residues 58 to 111 form a disordered region; sequence PTGVGNKDNLAENSEGKEVWEATETQGEEEEEETTTTPSSSPTPFPSPSPTSED. The 138-residue stretch at 188 to 325 folds into the C-type lectin domain; that stretch reads LGHKCFLLSR…CERRLYFVCE (138 aa). 2 disulfide bridges follow: C209–C324 and C301–C316.

Post-translationally, O-glycosylated. Probably sulfated on the O-glycans.

The protein localises to the cytoplasm. It is found in the secreted. Promotes osteogenesis by stimulating the differentiation of mesenchymal progenitors into mature osteoblasts. Important for repair and maintenance of adult bone. The protein is C-type lectin domain family 11 member A (Clec11a) of Rattus norvegicus (Rat).